The following is an 838-amino-acid chain: Periostin (838 aa).

Residues 1 to 23 (MVPLLPLYALLLLFLCDINPANA) form the signal peptide. Positions 42–96 (GPNVCALQQILGTKKKYFSSCKNWYQGAICGKKTTVLYECCPGYMRMEGMKGCPA) constitute an EMI domain. 5 disulfides stabilise this stretch: Cys-46-Cys-82, Cys-71-Cys-335, Cys-81-Cys-94, Cys-210-Cys-313, and Cys-469-Cys-474. Residue Cys-62 is modified to S-cysteinyl cysteine. FAS1 domains follow at residues 99–232 (PIDH…DRVL), 236–367 (GTSI…DEVL), 370–494 (DSAK…REII), and 498–630 (EKSL…DKLL). The N-linked (GlcNAc...) asparagine glycan is linked to Asn-601. The disordered stretch occupies residues 811-838 (QGDTPAKKIPANKRVQGPRRRSREGRSQ). The segment covering 826-838 (QGPRRRSREGRSQ) has biased composition (basic residues).

As to quaternary structure, homodimer. Interacts with BMP1 and fibronectin. Post-translationally, gamma-carboxylation is controversial. Gamma-carboxyglutamated; gamma-carboxyglutamate residues are formed by vitamin K dependent carboxylation; these residues may be required for binding to calcium. According to a more recent report in human, does not contain vitamin K-dependent gamma-carboxyglutamate residues. In terms of tissue distribution, preferentially expressed in periosteum and periodontal ligament. Also expressed in the developing and adult heart.

Its subcellular location is the golgi apparatus. It is found in the secreted. The protein localises to the extracellular space. The protein resides in the extracellular matrix. Induces cell attachment and spreading and plays a role in cell adhesion. Enhances incorporation of BMP1 in the fibronectin matrix of connective tissues, and subsequent proteolytic activation of lysyl oxidase LOX. This chain is Periostin (Postn), found in Mus musculus (Mouse).